Here is a 516-residue protein sequence, read N- to C-terminus: Beta-glucosidase 1 (516 aa).

An N-terminal signal peptide occupies residues 1 to 21 (MGHRLVVVLLLALLVAGAARA). Residue Q68 participates in a beta-D-glucoside binding. N96 is a glycosylation site (N-linked (GlcNAc...) asparagine). A beta-D-glucoside contacts are provided by residues H169 and 214-215 (NE). E215 acts as the Proton donor in catalysis. C234 and C237 are oxidised to a cystine. N290 is a glycosylation site (N-linked (GlcNAc...) asparagine). An a beta-D-glucoside-binding site is contributed by Y353. N-linked (GlcNAc...) asparagine glycosylation is present at N364. E424 contributes to the a beta-D-glucoside binding site. E424 serves as the catalytic Nucleophile. N-linked (GlcNAc...) asparagine glycosylation occurs at N432. Residues W471, 478-479 (EW), and F487 each bind a beta-D-glucoside.

This sequence belongs to the glycosyl hydrolase 1 family.

It carries out the reaction Hydrolysis of terminal, non-reducing beta-D-glucosyl residues with release of beta-D-glucose.. The chain is Beta-glucosidase 1 (BGLU1) from Oryza sativa subsp. japonica (Rice).